The following is a 50-amino-acid chain: Large ribosomal subunit protein eL39 (50 aa).

The protein belongs to the eukaryotic ribosomal protein eL39 family.

This chain is Large ribosomal subunit protein eL39 (rpl39e), found in Archaeoglobus fulgidus (strain ATCC 49558 / DSM 4304 / JCM 9628 / NBRC 100126 / VC-16).